Here is a 450-residue protein sequence, read N- to C-terminus: Tripartite motif-containing protein 77 (450 aa).

The segment at 15–56 (CSICTDYLTDPVTICCGHRFCSPCLCLLWEDTLTPNCCPVCR) adopts an RING-type zinc-finger fold. A B box-type zinc finger spans residues 88 to 131 (SAMLICRRHQEIKNLICETDRSLLCFLCSQSPRHATHKHYMTRE). Residues C93, H96, C115, and H121 each contribute to the Zn(2+) site. The B30.2/SPRY domain maps to 269-450 (QLSAWTITGV…LRPFICHGSK (182 aa)).

Belongs to the TRIM/RBCC family.

This is Tripartite motif-containing protein 77 (TRIM77) from Homo sapiens (Human).